Consider the following 465-residue polypeptide: Probable spore coat protein DDB_G0283555 (465 aa).

Positions 1 to 22 are cleaved as a signal peptide; that stretch reads MRINNLLVCLVLVFSTLSISNA. The DSCP-N domain occupies 35 to 153; it reads RNCDSLSEDQ…RYPVCKGGGG (119 aa). Follistatin-like domains are found at residues 160–182, 195–217, 229–251, 257–280, 287–309, 318–340, and 435–458; these read PCKN…AYCV, LCKA…ACCV, LCDA…ANCV, ECEH…PHCQ, LCRN…PTCI, PCRD…PSCV, and LCEF…PVCL.

Functionally, may contribute to the structure of the coat at the interface between the middle, cellulosic layer and the outer, electron-dense, proteinaceous layer. In Dictyostelium discoideum (Social amoeba), this protein is Probable spore coat protein DDB_G0283555.